We begin with the raw amino-acid sequence, 396 residues long: Metallophosphoesterase 1 (396 aa).

The chain crosses the membrane as a helical span at residues 28–48 (TVVIISVLLFCEYFIYYLVLF). A divalent metal cation-binding residues include aspartate 75, aspartate 117, asparagine 155, histidine 249, histidine 303, and histidine 305. The chain crosses the membrane as a helical span at residues 356–376 (TVLTMYGAAAGFLMILILVHF).

Belongs to the metallophosphoesterase superfamily. MPPE1 family. Interacts with GPI-anchor proteins (via the GPI portion). Interacts with TMED10. The cofactor is Mn(2+).

It localises to the endoplasmic reticulum-Golgi intermediate compartment membrane. Its function is as follows. Metallophosphoesterase that catalyzes the removal of a side-chain ethanolamine-phosphate (EtNP) from the second mannose of the GPI-anchor protein intermediate. Participates in the glycan remodeling steps of GPI-anchor maturation to allow an efficient transport of GPI-anchor proteins from the endoplasmic reticulum to the Golgi. The polypeptide is Metallophosphoesterase 1 (Mus musculus (Mouse)).